The chain runs to 330 residues: Phosphate acyltransferase (330 aa).

The protein belongs to the PlsX family. In terms of assembly, homodimer. Probably interacts with PlsY.

The protein resides in the cytoplasm. It catalyses the reaction a fatty acyl-[ACP] + phosphate = an acyl phosphate + holo-[ACP]. It functions in the pathway lipid metabolism; phospholipid metabolism. In terms of biological role, catalyzes the reversible formation of acyl-phosphate (acyl-PO(4)) from acyl-[acyl-carrier-protein] (acyl-ACP). This enzyme utilizes acyl-ACP as fatty acyl donor, but not acyl-CoA. This chain is Phosphate acyltransferase, found in Bacillus mycoides (strain KBAB4) (Bacillus weihenstephanensis).